Here is a 351-residue protein sequence, read N- to C-terminus: Cytochrome c biogenesis protein CcsA (351 aa).

The next 8 membrane-spanning stretches (helical) occupy residues 17–37 (VLFL…LPAI), 38–58 (NALG…LLGA), 68–88 (LSNL…VHLI), 97–117 (LVGV…TLTL), 143–163 (MMLS…FLVI), 259–279 (IIGL…VWAN), 286–306 (WSWD…AAYL), and 320–340 (AILA…VNLL).

It belongs to the CcmF/CycK/Ccl1/NrfE/CcsA family. In terms of assembly, may interact with ccs1.

The protein resides in the cellular thylakoid membrane. Required during biogenesis of c-type cytochromes (cytochrome c6 and cytochrome f) at the step of heme attachment. This Nostoc sp. (strain PCC 7120 / SAG 25.82 / UTEX 2576) protein is Cytochrome c biogenesis protein CcsA.